The chain runs to 564 residues: Rhotekin (564 aa).

Arg-14 bears the Omega-N-methylarginine mark. Residues 17 to 98 (ALEMEFKRGR…LQRRKEAQVL (82 aa)) form the REM-1 domain. Phosphoserine occurs at positions 30 and 106. Arg-230 carries the asymmetric dimethylarginine modification. The residue at position 232 (Ser-232) is a Phosphoserine. A PH domain is found at 309–416 (QPTASGALRV…WMEALWQLFF (108 aa)). The interval 518 to 564 (TFSLDAAPADHSLGPSRSVAPLPPQRSPKSRGFYSKSQLGPWLQSPV) is disordered. 3 positions are modified to phosphoserine: Ser-520, Ser-529, and Ser-544.

Interacts via its C-terminal region with the TAX1BP3 PDZ domain. This interaction facilitates Rho-mediated activation of the c-Fos serum response element (SRE). Interacts with SEPT9. Specifically binds to GTP-bound RHOA, RHOB and RHOC and inhibits their GTPase activity. In terms of tissue distribution, abundantly expressed in brain and kidney. Weakly expressed in lung, testis, skeletal muscle, heart and thymus.

Its function is as follows. Mediates Rho signaling to activate NF-kappa-B and may confer increased resistance to apoptosis to cells in gastric tumorigenesis. May play a novel role in the organization of septin structures. This chain is Rhotekin, found in Mus musculus (Mouse).